Consider the following 714-residue polypeptide: Polyribonucleotide nucleotidyltransferase (714 aa).

Mg(2+) contacts are provided by D486 and D492. The 60-residue stretch at 553 to 612 (PRIITMKINPEKIRDVIGKGGAVIRALTEETGTTIDIEEDGTIKIGCTSAEAGEEAKKRI) folds into the KH domain. An S1 motif domain is found at 622-690 (GQVYDGTVLK…DKGRVRLSAK (69 aa)).

The protein belongs to the polyribonucleotide nucleotidyltransferase family. Mg(2+) is required as a cofactor.

It localises to the cytoplasm. It catalyses the reaction RNA(n+1) + phosphate = RNA(n) + a ribonucleoside 5'-diphosphate. In terms of biological role, involved in mRNA degradation. Catalyzes the phosphorolysis of single-stranded polyribonucleotides processively in the 3'- to 5'-direction. The polypeptide is Polyribonucleotide nucleotidyltransferase (Methylobacillus flagellatus (strain ATCC 51484 / DSM 6875 / VKM B-1610 / KT)).